The following is a 145-amino-acid chain: uncharacterized protein (145 aa).

To B.subtilis XkdJ.

This is an uncharacterized protein from Bacillus subtilis (strain 168).